The following is a 311-amino-acid chain: VQ motif-containing protein 9 (311 aa).

Low complexity predominate over residues 1 to 27; it reads MDKSCNSSGDSSAVSASATSSTGNNTT. A disordered region spans residues 1-78; it reads MDKSCNSSGD…QINQGNLHQH (78 aa). The VQ motif lies at 90-99; sequence FRDVVQKLTG. Disordered regions lie at residues 103 to 125, 228 to 266, and 290 to 311; these read HERI…SSRL, QQEN…PPLF, and GQLG…YKGH. The span at 240 to 249 shows a compositional bias: pro residues; that stretch reads FPPPHPPPPS. The span at 290-302 shows a compositional bias: low complexity; sequence GQLGFPVSPTTVP.

In terms of assembly, interacts (via N-terminus) with WRKY8. In terms of tissue distribution, highly expressed in roots and at lower levels in rosette leaves, cauline leaves, stems, flowers and siliques.

The protein resides in the nucleus. Functions as a negative regulator of salt stress response. Functions as a repressor of WRKY8 transcription factor by decreasing the DNA-binding activity of WRKY8 and acts antagonistically with WRKY8 to regulate sodium and potassium homeostasis under salt stress. The sequence is that of VQ motif-containing protein 9 from Arabidopsis thaliana (Mouse-ear cress).